An 858-amino-acid polypeptide reads, in one-letter code: Zinc finger protein ZXDC (858 aa).

Disordered stretches follow at residues Met-1–Ser-73, Asp-85–Ala-108, and Ala-142–Ala-175. Residues Ala-59 to Glu-68 show a composition bias toward pro residues. Low complexity predominate over residues Ala-142–Pro-152. C2H2-type zinc fingers lie at residues Tyr-176–His-200, Phe-209–His-233, Phe-239–His-263, Phe-269–His-291, Tyr-298–His-322, Phe-329–His-353, Phe-359–His-383, Phe-389–His-413, Phe-419–His-443, and Ser-452–His-477. Positions Asp-624–Leu-634 are enriched in polar residues. Residues Asp-624–Ser-652 form a disordered region. Residues Thr-635–Gly-651 show a composition bias toward low complexity. A Glycyl lysine isopeptide (Lys-Gly) (interchain with G-Cter in SUMO) cross-link involves residue Lys-661. Disordered regions lie at residues Asp-671 to Gly-714 and Val-727 to Gly-751. The span at Gly-681–Glu-692 shows a compositional bias: polar residues.

The protein belongs to the ZXD family. In terms of assembly, self-associates. Interacts with ZXDB and CIITA. Post-translationally, sumoylated at Lys-661 with SUMO1, SUMO2 and SUMO3; sumoylation enhances the activity of the transcriptional activation domain.

The protein localises to the nucleus. Its function is as follows. Cooperates with CIITA to promote transcription of MHC class I and MHC class II genes. In Mus musculus (Mouse), this protein is Zinc finger protein ZXDC (Zxdc).